A 552-amino-acid polypeptide reads, in one-letter code: Carboxypeptidase Y homolog A (552 aa).

The signal sequence occupies residues 1–18 (MRIATSTLLVGAASAAFA). Residues 19–133 (PQDGTQRVLN…KLDNYNLRAR (115 aa)) constitute a propeptide that is removed on maturation. 5 disulfides stabilise this stretch: C187/C427, C321/C335, C345/C368, C352/C361, and C390/C397. N218 carries N-linked (GlcNAc...) asparagine glycosylation. Residue S274 is part of the active site. The active site involves D466. N516 carries N-linked (GlcNAc...) asparagine glycosylation. The active site involves H527.

It belongs to the peptidase S10 family.

It is found in the vacuole. It catalyses the reaction Release of a C-terminal amino acid with broad specificity.. Vacuolar carboxypeptidase involved in degradation of small peptides. Digests preferentially peptides containing an aliphatic or hydrophobic residue in P1' position, as well as methionine, leucine or phenylalanine in P1 position of ester substrate. This chain is Carboxypeptidase Y homolog A (CPYA), found in Pyricularia oryzae (strain 70-15 / ATCC MYA-4617 / FGSC 8958) (Rice blast fungus).